Consider the following 253-residue polypeptide: Putative ankyrin repeat protein NMB1133/NMB1171 (253 aa).

2 ANK repeats span residues 196-225 (DGYT…NPAS) and 229-252 (EGYT…LEPR).

The sequence is that of Putative ankyrin repeat protein NMB1133/NMB1171 from Neisseria meningitidis serogroup B (strain ATCC BAA-335 / MC58).